A 404-amino-acid chain; its full sequence is Glucose-1-phosphate adenylyltransferase 2 (404 aa).

Alpha-D-glucose 1-phosphate contacts are provided by residues Tyr-97, Gly-162, 177–178 (EK), and Ser-195.

Belongs to the bacterial/plant glucose-1-phosphate adenylyltransferase family. In terms of assembly, homotetramer.

The catalysed reaction is alpha-D-glucose 1-phosphate + ATP + H(+) = ADP-alpha-D-glucose + diphosphate. Its pathway is glycan biosynthesis; glycogen biosynthesis. Functionally, involved in the biosynthesis of ADP-glucose, a building block required for the elongation reactions to produce glycogen. Catalyzes the reaction between ATP and alpha-D-glucose 1-phosphate (G1P) to produce pyrophosphate and ADP-Glc. The protein is Glucose-1-phosphate adenylyltransferase 2 of Vibrio vulnificus (strain YJ016).